Consider the following 172-residue polypeptide: 3-hydroxydecanoyl-[acyl-carrier-protein] dehydratase (172 aa).

Histidine 71 is an active-site residue.

The protein belongs to the thioester dehydratase family. FabA subfamily. As to quaternary structure, homodimer.

The protein localises to the cytoplasm. It carries out the reaction a (3R)-hydroxyacyl-[ACP] = a (2E)-enoyl-[ACP] + H2O. The enzyme catalyses (3R)-hydroxydecanoyl-[ACP] = (2E)-decenoyl-[ACP] + H2O. It catalyses the reaction (2E)-decenoyl-[ACP] = (3Z)-decenoyl-[ACP]. It functions in the pathway lipid metabolism; fatty acid biosynthesis. Its function is as follows. Necessary for the introduction of cis unsaturation into fatty acids. Catalyzes the dehydration of (3R)-3-hydroxydecanoyl-ACP to E-(2)-decenoyl-ACP and then its isomerization to Z-(3)-decenoyl-ACP. Can catalyze the dehydratase reaction for beta-hydroxyacyl-ACPs with saturated chain lengths up to 16:0, being most active on intermediate chain length. This chain is 3-hydroxydecanoyl-[acyl-carrier-protein] dehydratase, found in Escherichia coli O127:H6 (strain E2348/69 / EPEC).